Consider the following 251-residue polypeptide: Small ribosomal subunit protein uS3 (251 aa).

The KH type-2 domain occupies 39–109; it reads IRNYVQARLK…EVKIDVIEVI (71 aa). Positions 222–239 are enriched in basic and acidic residues; it reads LKKIKDRRGEQRSRGRDS. Positions 222 to 251 are disordered; sequence LKKIKDRRGEQRSRGRDSRNRRRRKPRQTT. The span at 240–251 shows a compositional bias: basic residues; sequence RNRRRRKPRQTT.

The protein belongs to the universal ribosomal protein uS3 family. As to quaternary structure, part of the 30S ribosomal subunit. Forms a tight complex with proteins S10 and S14.

In terms of biological role, binds the lower part of the 30S subunit head. Binds mRNA in the 70S ribosome, positioning it for translation. In Prosthecochloris aestuarii (strain DSM 271 / SK 413), this protein is Small ribosomal subunit protein uS3.